An 81-amino-acid chain; its full sequence is CLAVATA3/ESR (CLE)-related protein 12 (81 aa).

The first 31 residues, 1–31 (MENSNKVPISKIGLIMLMIFSTFFMSPHARR), serve as a signal peptide directing secretion. The span at 55–67 (KRSRTDLEDKAVP) shows a compositional bias: basic and acidic residues. The tract at residues 55-81 (KRSRTDLEDKAVPGDRLSPGGPNHIHN) is disordered. 2 positions are modified to hydroxyproline: Pro-73 and Pro-76. O-linked (Ara...) hydroxyproline glycosylation occurs at Pro-76.

This sequence belongs to the CLV3/ESR signal peptide family. Post-translationally, the O-glycosylation (arabinosylation) of the hydroxyproline Pro-76 enhances binding affinity of the CLE12p peptide for its receptor. As to expression, expressed in young nodules throughout the central tissue. Expressed in the apical region of elongated nodules, corresponding to the meristematic and early infection zones.

The protein localises to the secreted. The protein resides in the extracellular space. Functionally, signaling peptide involved in the regulation of nodulation. Moves from root to shoot to function with the receptor kinase SUNN, in a signaling pathway that plays roles during cellular differentiation, both at the onset of nodulation, and later during nodule meristem development and subsequent homeostasis. Interacts with SUNN signaling to control nodule numbers. SUNN is involved in the autoregulation of nodulation (AON), a long distance systemic signaling from root to shoot and back again, which allows legumes to limit the number of root nodules formed based on available nitrogen and previous rhizobial colonization. This chain is CLAVATA3/ESR (CLE)-related protein 12, found in Medicago truncatula (Barrel medic).